We begin with the raw amino-acid sequence, 283 residues long: Pantothenate synthetase (283 aa).

31-38 is a binding site for ATP; that stretch reads MGALHEGH. His-38 functions as the Proton donor in the catalytic mechanism. Gln-62 contributes to the (R)-pantoate binding site. Gln-62 contributes to the beta-alanine binding site. Residue 148–151 coordinates ATP; it reads GKKD. Position 154 (Gln-154) interacts with (R)-pantoate. ATP contacts are provided by residues Val-177 and 185–188; that span reads RSSR.

The protein belongs to the pantothenate synthetase family. Homodimer.

Its subcellular location is the cytoplasm. The enzyme catalyses (R)-pantoate + beta-alanine + ATP = (R)-pantothenate + AMP + diphosphate + H(+). It participates in cofactor biosynthesis; (R)-pantothenate biosynthesis; (R)-pantothenate from (R)-pantoate and beta-alanine: step 1/1. Catalyzes the condensation of pantoate with beta-alanine in an ATP-dependent reaction via a pantoyl-adenylate intermediate. This Staphylococcus haemolyticus (strain JCSC1435) protein is Pantothenate synthetase.